The chain runs to 382 residues: Putative phospholipase A1 (382 aa).

The N-terminal stretch at 1 to 27 is a signal peptide; that stretch reads MPTMGAEMNTRNMRYILLTGLLPMASA. Over 28–65 the chain is Periplasmic; that stretch reads FGETALQCAALTDNVTRLACYDRIFAAQLPSSAGQEGQ. The beta stranded transmembrane segment at 66–78 threads the bilayer; that stretch reads ESKAVLNLTETVR. Topologically, residues 79–168 are extracellular; sequence SSLDKGEAVI…VQEKFGQQKR (90 aa). A beta stranded transmembrane segment spans residues 169–183; sequence AETKLQVSFKSKIAE. Topologically, residues 184-189 are periplasmic; the sequence is DLFKTR. Residues 190-202 traverse the membrane as a beta stranded segment; sequence ADLWFGYTQRSDW. The Extracellular segment spans residues 203-213; the sequence is QIYNQGRKSAP. Ser211 contributes to the Ca(2+) binding site. Residues 214–233 traverse the membrane as a beta stranded segment; it reads FRNTDYKPEIFLTQPVKADL. At 234-236 the chain is on the periplasmic side; sequence PFG. The chain crosses the membrane as a beta stranded span at residues 237–250; it reads GRLRMLGAGFVHQS. The Proton acceptor role is filled by His248. Residue Ser250 is the Nucleophile of the active site. Residues 251–259 are Extracellular-facing; the sequence is NGQSRPESR. Ser258 is a binding site for Ca(2+). Residues 260-272 form a beta stranded membrane-spanning segment; it reads SWNRIYAMAGMEW. The Periplasmic segment spans residues 273–274; it reads GK. Residues 275 to 284 traverse the membrane as a beta stranded segment; that stretch reads LTVIPRVWVR. The Extracellular portion of the chain corresponds to 285–306; it reads AFDQSGDKNDNPDIADYMGYGD. Asp294 provides a ligand contact to Ca(2+). Residues 307–313 form a beta stranded membrane-spanning segment; the sequence is VKLQYRL. At 314–315 the chain is on the periplasmic side; sequence ND. The chain crosses the membrane as a beta stranded span at residues 316–325; sequence RQNVYSVLRY. Topologically, residues 326-332 are extracellular; that stretch reads NPKTGYG. The chain crosses the membrane as a beta stranded span at residues 333 to 341; that stretch reads AIEAAYTFP. Topologically, residues 342-346 are periplasmic; sequence IKGKL. The chain crosses the membrane as a beta stranded span at residues 347–356; it reads KGVVRGFHGY. At 357-365 the chain is on the extracellular side; that stretch reads GESLIDYNH. The chain crosses the membrane as a beta stranded span at residues 366 to 377; sequence KQNGIGIGLMFN. At 378–382 the chain is on the periplasmic side; it reads DLDGI.

Belongs to the phospholipase A1 family. Homodimer; dimerization is reversible, and the dimeric form is the active one. It depends on Ca(2+) as a cofactor.

Its subcellular location is the cell outer membrane. It catalyses the reaction a 1,2-diacyl-sn-glycero-3-phosphocholine + H2O = a 2-acyl-sn-glycero-3-phosphocholine + a fatty acid + H(+). The catalysed reaction is a 1,2-diacyl-sn-glycero-3-phosphocholine + H2O = a 1-acyl-sn-glycero-3-phosphocholine + a fatty acid + H(+). Functionally, hydrolysis of phosphatidylcholine with phospholipase A2 (EC 3.1.1.4) and phospholipase A1 (EC 3.1.1.32) activities. This Neisseria meningitidis serogroup B (strain ATCC BAA-335 / MC58) protein is Putative phospholipase A1.